The sequence spans 88 residues: MIKNAFISFQEQKEESRGSVEFQVFSFTNKIRRLTSHLELHRKDYLSQRGLRKILGKRQRLLAYLSKKNRGRYKELINQLNIRELKTR.

Belongs to the universal ribosomal protein uS15 family. As to quaternary structure, part of the 30S ribosomal subunit.

The protein resides in the plastid. Its subcellular location is the chloroplast. The protein is Small ribosomal subunit protein uS15c (rps15) of Nasturtium officinale (Watercress).